Here is a 284-residue protein sequence, read N- to C-terminus: Bifunctional protein FolD (284 aa).

Residues 165 to 167 (GRS), Ser190, and Ile231 each bind NADP(+).

The protein belongs to the tetrahydrofolate dehydrogenase/cyclohydrolase family. In terms of assembly, homodimer.

The enzyme catalyses (6R)-5,10-methylene-5,6,7,8-tetrahydrofolate + NADP(+) = (6R)-5,10-methenyltetrahydrofolate + NADPH. It catalyses the reaction (6R)-5,10-methenyltetrahydrofolate + H2O = (6R)-10-formyltetrahydrofolate + H(+). It functions in the pathway one-carbon metabolism; tetrahydrofolate interconversion. Its function is as follows. Catalyzes the oxidation of 5,10-methylenetetrahydrofolate to 5,10-methenyltetrahydrofolate and then the hydrolysis of 5,10-methenyltetrahydrofolate to 10-formyltetrahydrofolate. In Streptococcus thermophilus (strain ATCC BAA-250 / LMG 18311), this protein is Bifunctional protein FolD.